A 110-amino-acid polypeptide reads, in one-letter code: UPF0102 protein Abu_0255 (110 aa).

The protein belongs to the UPF0102 family.

This Aliarcobacter butzleri (strain RM4018) (Arcobacter butzleri) protein is UPF0102 protein Abu_0255.